The sequence spans 100 residues: Small ribosomal subunit protein uS14c (100 aa).

It belongs to the universal ribosomal protein uS14 family. As to quaternary structure, part of the 30S ribosomal subunit.

The protein localises to the plastid. It is found in the chloroplast. Its function is as follows. Binds 16S rRNA, required for the assembly of 30S particles. The polypeptide is Small ribosomal subunit protein uS14c (Populus alba (White poplar)).